Reading from the N-terminus, the 307-residue chain is Aspartate carbamoyltransferase catalytic subunit (307 aa).

The carbamoyl phosphate site is built by Arg59 and Thr60. L-aspartate is bound at residue Lys87. Carbamoyl phosphate is bound by residues Arg109, His139, and Gln142. L-aspartate is bound by residues Arg172 and Arg224. 2 residues coordinate carbamoyl phosphate: Ala265 and Pro266.

The protein belongs to the aspartate/ornithine carbamoyltransferase superfamily. ATCase family. Heterododecamer (2C3:3R2) of six catalytic PyrB chains organized as two trimers (C3), and six regulatory PyrI chains organized as three dimers (R2).

It carries out the reaction carbamoyl phosphate + L-aspartate = N-carbamoyl-L-aspartate + phosphate + H(+). It participates in pyrimidine metabolism; UMP biosynthesis via de novo pathway; (S)-dihydroorotate from bicarbonate: step 2/3. Its function is as follows. Catalyzes the condensation of carbamoyl phosphate and aspartate to form carbamoyl aspartate and inorganic phosphate, the committed step in the de novo pyrimidine nucleotide biosynthesis pathway. This is Aspartate carbamoyltransferase catalytic subunit from Streptococcus agalactiae serotype Ia (strain ATCC 27591 / A909 / CDC SS700).